A 2197-amino-acid polypeptide reads, in one-letter code: Activating signal cointegrator 1 complex subunit 3 (2197 aa).

At serine 12 the chain carries Phosphoserine. Coiled coils occupy residues 18–80 (KQDN…AKQI) and 328–356 (IQSE…KAGE). The Helicase ATP-binding 1 domain maps to 487–670 (DTAYNTNENM…FLHVNPYIGL (184 aa)). 500-507 (APTGAGKT) is an ATP binding site. An N6-acetyllysine modification is found at lysine 573. Residues 612–615 (DEVH) carry the DEVH box motif. The 219-residue stretch at 697 to 915 (QLNNMDEVCY…GTVTNVEEAV (219 aa)) folds into the Helicase C-terminal 1 domain. The SEC63 1 domain maps to 979–1288 (STDLGRTASH…GAEAVCIINF (310 aa)). A Helicase ATP-binding 2 domain is found at 1337–1512 (HTLYHTDCNV…WLNIKQMGLF (176 aa)). Residue 1350 to 1357 (APTGSGKT) coordinates ATP. The DEIH box signature appears at 1454–1457 (DEIH). In terms of domain architecture, Helicase C-terminal 2 spans 1565 to 1739 (RMLSSMTKLE…VLSDHLNAEI (175 aa)). The 364-residue stretch at 1812-2175 (PLTCGRIASY…YLGLDQQYDI (364 aa)) folds into the SEC63 2 domain.

This sequence belongs to the helicase family. Identified in the ASCC complex that contains ASCC1, ASCC2 and ASCC3. Functions as a scaffolding subunit that interacts directly with both ASCC1 and ASCC2. Interacts directly with ALKBH3, and thereby recruits ALKBH3 to the ASCC complex. Part of the ASC-1/TRIP4 complex, that contains TRIP4, ASCC1, ASCC2 and ASCC3. Part of the RQT (ribosome quality control trigger) complex, that contains ASCC2, ASCC3 and TRIP4. Associates with ribosomes; recruited to collided ribosomes. Interacts with ZCCHC4. Interacts with ZNF598. Interacts with RPS3.

The protein localises to the nucleus. Its subcellular location is the nucleus speckle. It localises to the cytoplasm. It is found in the cytosol. It catalyses the reaction Couples ATP hydrolysis with the unwinding of duplex DNA by translocating in the 3'-5' direction.. It carries out the reaction ATP + H2O = ADP + phosphate + H(+). Its function is as follows. ATPase involved both in DNA repair and rescue of stalled ribosomes. 3'-5' DNA helicase involved in repair of alkylated DNA: promotes DNA unwinding to generate single-stranded substrate needed for ALKBH3, enabling ALKBH3 to process alkylated N3-methylcytosine (3mC) within double-stranded regions. Also involved in activation of the ribosome quality control (RQC) pathway, a pathway that degrades nascent peptide chains during problematic translation. Drives the splitting of stalled ribosomes that are ubiquitinated in a ZNF598-dependent manner, as part of the ribosome quality control trigger (RQT) complex. Part of the ASC-1 complex that enhances NF-kappa-B, SRF and AP1 transactivation. This Rattus norvegicus (Rat) protein is Activating signal cointegrator 1 complex subunit 3 (Ascc3).